The following is a 244-amino-acid chain: tRNA (guanine-N(1)-)-methyltransferase (244 aa).

S-adenosyl-L-methionine is bound by residues glycine 123 and 143 to 148 (LGDFVM).

Belongs to the RNA methyltransferase TrmD family. As to quaternary structure, homodimer.

The protein localises to the cytoplasm. It carries out the reaction guanosine(37) in tRNA + S-adenosyl-L-methionine = N(1)-methylguanosine(37) in tRNA + S-adenosyl-L-homocysteine + H(+). Specifically methylates guanosine-37 in various tRNAs. The polypeptide is tRNA (guanine-N(1)-)-methyltransferase (Ruegeria sp. (strain TM1040) (Silicibacter sp.)).